A 519-amino-acid polypeptide reads, in one-letter code: Chaperone SurA (519 aa).

A signal peptide spans 1 to 31 (MMRSLHSLRRMSGTVLALMLAAGLPLSAAQA). 2 stretches are compositionally biased toward low complexity: residues 31 to 45 (AQPA…QKPA) and 197 to 207 (PAAAQATRAPA). Disordered stretches follow at residues 31-50 (AQPA…PAPS) and 196-221 (NPAA…PAQS). The PpiC 1 domain occupies 223–324 (PAMLVLAQIL…NGFHILKVVD (102 aa)). A disordered region spans residues 328–361 (GGQPAQAARPAPAPAPQQPSSFQEGPSVAAPQGP). In terms of domain architecture, PpiC 2 spans 364–463 (VTQTHARHIL…FGWHLIQVLE (100 aa)).

Its subcellular location is the periplasm. It catalyses the reaction [protein]-peptidylproline (omega=180) = [protein]-peptidylproline (omega=0). Chaperone involved in the correct folding and assembly of outer membrane proteins. Recognizes specific patterns of aromatic residues and the orientation of their side chains, which are found more frequently in integral outer membrane proteins. May act in both early periplasmic and late outer membrane-associated steps of protein maturation. The chain is Chaperone SurA from Bordetella bronchiseptica (strain ATCC BAA-588 / NCTC 13252 / RB50) (Alcaligenes bronchisepticus).